We begin with the raw amino-acid sequence, 476 residues long: Protein transport protein Sec61 subunit alpha isoform A (476 aa).

Topologically, residues 2-33 are cytoplasmic; the sequence is GIKFLEVIKPFCAVLPEIQKPERKIQFREKVL. The helical transmembrane segment at 34-53 threads the bilayer; that stretch reads WTAITLFIFLVCCQIPLFGI. At 54-76 the chain is on the lumenal side; that stretch reads MSSDSADPFYWMRVILASNRGTL. Residues 77 to 96 form a helical membrane-spanning segment; that stretch reads MELGISPIVTSGLIMQLLAG. Residues 97–117 lie on the Cytoplasmic side of the membrane; sequence AKIIEVGDTPKDRALFNGAQK. The helical transmembrane segment at 118–138 threads the bilayer; the sequence is LFGMIITIGQSIVYVMTGMYG. At 139-144 the chain is on the lumenal side; it reads DPSEMG. A helical transmembrane segment spans residues 145 to 165; that stretch reads AGICLLIIIQLFVAGLIVLLL. Residues 166–172 are Cytoplasmic-facing; the sequence is DELLQKG. Residues 173–193 traverse the membrane as a helical segment; sequence YGLGSGISLFIATNICETIVW. Over 194-240 the chain is Lumenal; it reads KAFSPTTVNTGRGTEFEGAIIALFHLLATRTDKVRALREAFYRQNLP. A helical membrane pass occupies residues 241 to 261; sequence NLLNLIATVFVFAVVIYFQGF. The Cytoplasmic portion of the chain corresponds to 262–288; sequence RVDLPIKSARYRGQYNTYPIKLFYTSN. The helical transmembrane segment at 289 to 309 threads the bilayer; the sequence is IPIILQSALVSNLYVISQMLS. The Lumenal segment spans residues 310–354; that stretch reads TRFSGNFLVNLLGTWSDTSTGGPARAYPVGGLCYFLSPPESFGSV. Residues 355–375 traverse the membrane as a helical segment; the sequence is LDDPIHAAIYIVFMLGSCAFF. Residues 376–420 are Cytoplasmic-facing; the sequence is SKTWIEVSGSSAKDVAKQLKEQQMVMGGHRETSMVHELNRYIPTA. Residues 421 to 441 form a helical membrane-spanning segment; that stretch reads AAFGGLCIGGLSVMADFLGAI. The Lumenal segment spans residues 442-445; that stretch reads GSGT. The chain crosses the membrane as a helical span at residues 446–462; that stretch reads GILLAVTIIYQYFEIFV. Residues 463 to 476 are Cytoplasmic-facing; it reads KEQSEMGSMGALLF.

It belongs to the SecY/SEC61-alpha family. The SEC61 channel-forming translocon complex consists of channel-forming core components SEC61A1, SEC61B and SEC61G and different auxiliary components such as SEC62 and SEC63. The SEC61 channel associates with the multi-pass translocon (MPT) complex.

It localises to the endoplasmic reticulum membrane. In terms of biological role, component of SEC61 channel-forming translocon complex that mediates transport of signal peptide-containing precursor polypeptides across the endoplasmic reticulum (ER). Forms a ribosome receptor and a gated pore in the ER membrane, both functions required for cotranslational translocation of nascent polypeptides. May cooperate with auxiliary protein SEC62, SEC63 and HSPA5/BiP to enable post-translational transport of small presecretory proteins. The SEC61 channel is also involved in ER membrane insertion of transmembrane proteins: it mediates membrane insertion of the first few transmembrane segments of proteins, while insertion of subsequent transmembrane regions of multi-pass membrane proteins is mediated by the multi-pass translocon (MPT) complex. This is Protein transport protein Sec61 subunit alpha isoform A (sec61aa) from Oncorhynchus mykiss (Rainbow trout).